The sequence spans 153 residues: Ribonuclease H (153 aa).

An RNase H type-1 domain is found at 7–148 (PADLVEMWTD…ADMLANQGVA (142 aa)). Mg(2+) is bound by residues Asp16, Glu54, Asp76, and Asp140.

This sequence belongs to the RNase H family. In terms of assembly, monomer. Mg(2+) is required as a cofactor.

The protein localises to the cytoplasm. It carries out the reaction Endonucleolytic cleavage to 5'-phosphomonoester.. Its function is as follows. Endonuclease that specifically degrades the RNA of RNA-DNA hybrids. This Bordetella avium (strain 197N) protein is Ribonuclease H.